The following is a 274-amino-acid chain: 4-diphosphocytidyl-2-C-methyl-D-erythritol kinase (274 aa).

Lys8 is an active-site residue. 94–104 is an ATP binding site; sequence PSGAGLGGGSS. Residue Asp136 is part of the active site.

The protein belongs to the GHMP kinase family. IspE subfamily.

It carries out the reaction 4-CDP-2-C-methyl-D-erythritol + ATP = 4-CDP-2-C-methyl-D-erythritol 2-phosphate + ADP + H(+). The protein operates within isoprenoid biosynthesis; isopentenyl diphosphate biosynthesis via DXP pathway; isopentenyl diphosphate from 1-deoxy-D-xylulose 5-phosphate: step 3/6. Functionally, catalyzes the phosphorylation of the position 2 hydroxy group of 4-diphosphocytidyl-2C-methyl-D-erythritol. The chain is 4-diphosphocytidyl-2-C-methyl-D-erythritol kinase from Bacteroides thetaiotaomicron (strain ATCC 29148 / DSM 2079 / JCM 5827 / CCUG 10774 / NCTC 10582 / VPI-5482 / E50).